Reading from the N-terminus, the 397-residue chain is MRSLSLAWLLGGITLLAASASCNRTVNAPGPNSKGRSLIGRLDTPPPITGKGAPVEPGFSVDEFSASVLTGKLTTVFLPVIYIIVFVIGLPSNGMALWVFFFRTKKKHPAVIYMANLALADLLSVIWFPLKISYHLHGNDWTYGDALCKVLIGFFYGNMYCSILFMTCLSVQRYWVIVNPMGHSRKRANIAVGVSLAIWLLIFLVTIPLYVMRQTIYIPALNITTCHDVLPEEVLVGDMFSYFLSLAIGVFLFPALLTASAYVLMIKTLRSSAMDEHSEKKRRRAIRLIITVLSMYFICFAPSNVLLVVHYFLIKSQRQSHVYALYLVALCLSTLNSCIDPFVYYFVSKDFRDQARNALLCRSVRTVKRMQISLTSNKFSRKSSSYSSSSTSVKTSY.

The N-terminal stretch at 1-25 (MRSLSLAWLLGGITLLAASASCNRT) is a signal peptide. Asn-23 carries N-linked (GlcNAc...) asparagine glycosylation. A propeptide spans 26–36 (VNAPGPNSKGR) (removed for receptor activation). Over 37–71 (SLIGRLDTPPPITGKGAPVEPGFSVDEFSASVLTG) the chain is Extracellular. The helical transmembrane segment at 72–101 (KLTTVFLPVIYIIVFVIGLPSNGMALWVFF) threads the bilayer. Residues 102-108 (FRTKKKH) lie on the Cytoplasmic side of the membrane. Residues 109 to 137 (PAVIYMANLALADLLSVIWFPLKISYHLH) traverse the membrane as a helical segment. Topologically, residues 138–149 (GNDWTYGDALCK) are extracellular. Residues Cys-148 and Cys-226 are joined by a disulfide bond. The helical transmembrane segment at 150-177 (VLIGFFYGNMYCSILFMTCLSVQRYWVI) threads the bilayer. The Cytoplasmic segment spans residues 178–183 (VNPMGH). The chain crosses the membrane as a helical span at residues 184–211 (SRKRANIAVGVSLAIWLLIFLVTIPLYV). Residues 212 to 235 (MRQTIYIPALNITTCHDVLPEEVL) are Extracellular-facing. The N-linked (GlcNAc...) asparagine glycan is linked to Asn-222. Residues 236-269 (VGDMFSYFLSLAIGVFLFPALLTASAYVLMIKTL) form a helical membrane-spanning segment. The Cytoplasmic segment spans residues 270–277 (RSSAMDEH). A helical transmembrane segment spans residues 278–317 (SEKKRRRAIRLIITVLSMYFICFAPSNVLLVVHYFLIKSQ). Topologically, residues 318–323 (RQSHVY) are extracellular. The chain crosses the membrane as a helical span at residues 324 to 347 (ALYLVALCLSTLNSCIDPFVYYFV). Residues 348–397 (SKDFRDQARNALLCRSVRTVKRMQISLTSNKFSRKSSSYSSSSTSVKTSY) lie on the Cytoplasmic side of the membrane. Cys-361 carries the S-palmitoyl cysteine lipid modification.

The protein belongs to the G-protein coupled receptor 1 family. As to quaternary structure, interacts with TLR4, COPS5 and TMED2. Interacts with GNAQ, GNA11, GNA12, GNA13 and GNA14. Post-translationally, a proteolytic cleavage generates a new N-terminus that functions as a tethered ligand. Activating serine proteases include trypsin, mast cell tryptase, coagulation factors VII and Xa, myeloblastin/PRTN3 and membrane-type serine protease 1/ST14. Proposed subsequent cleavage by serine proteases is leading to receptor deactivation and include neutrophil elastase and cathepsin G. At least in part, implicated proteases are also shown to activate the receptor; the glycosylation status of the receptor is thought to contribute to the difference. N-glycosylated and sialylated. In terms of processing, multiple phosphorylated on serine and threonine residues in the cytoplasmic region upon receptor activation; required for receptor desensitization and recruitment of beta-arrestin. Post-translationally, monoubiquitinated by Cbl at the plasma membrane and in early endosomes; not required for receptor endocytosis but for translocation to late endosomes or lysosomes. Deubiquitination involves Stambp and Usp8; required for lysosomal trafficking and receptor degradation.

The protein localises to the cell membrane. Functionally, receptor for trypsin and trypsin-like enzymes coupled to G proteins. Its function is mediated through the activation of several signaling pathways including phospholipase C (PLC), intracellular calcium, mitogen-activated protein kinase (MAPK), I-kappaB kinase/NF-kappaB and Rho. Can also be transactivated by cleaved F2R/PAR1. Involved in modulation of inflammatory responses and regulation of innate and adaptive immunity, and acts as a sensor for proteolytic enzymes generated during infection. Generally is promoting inflammation. Can signal synergistically with TLR4 and probably TLR2 in inflammatory responses and modulates Tlr3 signaling. Has a protective role in establishing the endothelial barrier; the activity involves coagulation factor X. Regulates endothelial cell barrier integrity during neutrophil extravasation, probably following proteolytic cleavage by PRTN3. Proposed to have a bronchoprotective role in airway epithelium, but also shown to compromise the airway epithelial barrier by interrupting E-cadherin adhesion. Involved in the regulation of vascular tone; activation results in hypotension presumably mediated by vasodilation. Associates with a subset of G proteins alpha subunits such as GNAQ, GNA11, GNA14, GNA12 and GNA13, but probably not with G(o)-alpha, G(i) subunit alpha-1 and G(i) subunit alpha-2. Believed to be a class B receptor which internalizes as a complex with arrestin and traffic with it to endosomal vesicles, presumably as desensitized receptor, for extended periods of time. Mediates inhibition of TNF-alpha stimulated JNK phosphorylation via coupling to G GNAQ and GNA11; the function involves dissociation of RIPK1 and Tradd from TNFR1. Mediates phosphorylation of nuclear factor NF-kappa-B RELA subunit at 'Ser-536'; the function involves Ikbkb and is predominantly independent of G proteins. Involved in cellular migration. Involved in cytoskeletal rearrangement and chemotaxis through beta-arrestin-promoted scaffolds; the function is independent of GNAQ and GNA11 and involves promotion of cofilin dephosphorylation and actin filament severing. Induces redistribution of COPS5 from the plasma membrane to the cytosol and activation of the JNK cascade is mediated by Cops5. Involved in the recruitment of leukocytes to the sites of inflammation and is the major PAR receptor capable of modulating eosinophil function such as pro-inflammatory cytokine secretion, superoxide production and degranulation. During inflammation promotes dendritic cell maturation, trafficking to the lymph nodes and subsequent T-cell activation. Involved in antimicrobial response of innate immune cells; activation enhances phagocytosis of Gram-positive and killing of Gram-negative bacteria. Acts synergistically with interferon-gamma in enhancing antiviral responses. Probably mediates activation of pro-inflammatory and pro-fibrotic responses in fibroblasts, triggered by coagulation factor Xa (F10). Probably mediates activation of barrier protective signaling responses in endothelial cells, triggered by coagulation factor Xa (F10). This Rattus norvegicus (Rat) protein is Proteinase-activated receptor 2 (F2rl1).